A 70-amino-acid chain; its full sequence is Translational regulator CsrA (70 aa).

The protein belongs to the CsrA/RsmA family. Homodimer; the beta-strands of each monomer intercalate to form a hydrophobic core, while the alpha-helices form wings that extend away from the core.

Its subcellular location is the cytoplasm. In terms of biological role, a translational regulator that binds mRNA to regulate translation initiation and/or mRNA stability. Usually binds in the 5'-UTR at or near the Shine-Dalgarno sequence preventing ribosome-binding, thus repressing translation. Its main target seems to be the major flagellin gene, while its function is anatagonized by FliW. The protein is Translational regulator CsrA of Clostridioides difficile (strain 630) (Peptoclostridium difficile).